The sequence spans 145 residues: LIM domain only protein 3 (145 aa).

LIM zinc-binding domains lie at 11-73 (KGCA…LFGV) and 75-137 (GNCA…GLMK).

This chain is LIM domain only protein 3, found in Danio rerio (Zebrafish).